Reading from the N-terminus, the 179-residue chain is MAGPDRAELAELVRRLSVVHGRVTLSSGREADYYVDLRRATLHHRASALIGRLMRELTADWDYSVVGGLTLGADPVATAIMHAPGRPIDAFVVRKSAKAHGMQRLIEGSEVTGQRVLVVEDTSTTGNSALTAVHAVQDVGGEVVGVATVVDRATGAAEAIEAEGLRYRSVLGLADLGLD.

Residues arginine 94, lysine 95, lysine 98, histidine 100, and 120–128 (EDTSTTGNS) contribute to the 5-phospho-alpha-D-ribose 1-diphosphate site. Orotate-binding residues include threonine 124 and arginine 152.

Belongs to the purine/pyrimidine phosphoribosyltransferase family. PyrE subfamily. In terms of assembly, homodimer. Mg(2+) serves as cofactor.

The catalysed reaction is orotidine 5'-phosphate + diphosphate = orotate + 5-phospho-alpha-D-ribose 1-diphosphate. The protein operates within pyrimidine metabolism; UMP biosynthesis via de novo pathway; UMP from orotate: step 1/2. Its function is as follows. Catalyzes the transfer of a ribosyl phosphate group from 5-phosphoribose 1-diphosphate to orotate, leading to the formation of orotidine monophosphate (OMP). The protein is Orotate phosphoribosyltransferase of Mycobacterium bovis (strain ATCC BAA-935 / AF2122/97).